The following is a 266-amino-acid chain: MITIKIGGSIVDSLHPSAIPDIKKAAAGGVVLVHGGGKEVTKVCEQLGKEPRFVTSPGNIKSRYTDKETAEIFTMVMSGRINKCIVRMLQQHGVNAVGLSGIDGGLIRAERKSRLVIVNERGRKQAIEGGYTGRITSVNSELLETLLGKGIVPVVSPIAMGNEYELLNVDGDRAAANIAGATKSERILFVTDVDGLMMDEKLVSRLSAAEAEEIRPKIGPGMEKKVLAATEALKMGVREAIIARGSRENPVSAAIAHENCTVIGDG.

Residues 36 to 37 (GG), R63, and N168 each bind substrate.

This sequence belongs to the acetylglutamate kinase family. LysZ subfamily.

The protein resides in the cytoplasm. It catalyses the reaction [amino-group carrier protein]-C-terminal-N-(1,4-dicarboxybutan-1-yl)-L-glutamine + ATP = [amino-group carrier protein]-C-terminal-N-(1-carboxy-5-phosphooxy-5-oxopentan-1-yl)-L-glutamine + ADP. The catalysed reaction is [amino-group carrier protein]-C-terminal-gamma-(L-glutamyl)-L-glutamate + ATP = [amino-group carrier protein]-C-terminal-gamma-(5-phospho-L-glutamyl)-L-glutamate + ADP. It functions in the pathway amino-acid biosynthesis; L-lysine biosynthesis via AAA pathway; L-lysine from L-alpha-aminoadipate (Thermus route): step 2/5. Its pathway is amino-acid biosynthesis; L-arginine biosynthesis. Involved in both the arginine and lysine biosynthetic pathways. Phosphorylates the LysW-bound precursors glutamate (for arginine biosynthesis), respectively alpha-aminoadipate (for lysine biosynthesis). This Cenarchaeum symbiosum (strain A) protein is Putative [LysW]-aminoadipate/[LysW]-glutamate kinase.